Consider the following 319-residue polypeptide: Probable cytochrome c oxidase subunit 2 (319 aa).

The signal sequence occupies residues 1–33 (MSPNGSDRSPRRPMRRKLLQALTAGLVLATATG). Transmembrane regions (helical) follow at residues 63–83 (WAAA…ATIF) and 101–121 (MPIE…LFYF). The Cu cation site is built by His227, Cys262, Cys266, and His270.

This sequence belongs to the cytochrome c oxidase subunit 2 family. The cofactor is Cu cation. Heme serves as cofactor.

The protein localises to the cell membrane. The enzyme catalyses 4 Fe(II)-[cytochrome c] + O2 + 8 H(+)(in) = 4 Fe(III)-[cytochrome c] + 2 H2O + 4 H(+)(out). In terms of biological role, subunits I and II form the functional core of the enzyme complex. Electrons originating in cytochrome c are transferred via heme a and Cu(A) to the binuclear center formed by heme a3 and Cu(B). The protein is Probable cytochrome c oxidase subunit 2 (ctaC) of Streptomyces avermitilis (strain ATCC 31267 / DSM 46492 / JCM 5070 / NBRC 14893 / NCIMB 12804 / NRRL 8165 / MA-4680).